The following is a 97-amino-acid chain: Large ribosomal subunit protein eL21 (97 aa).

Belongs to the eukaryotic ribosomal protein eL21 family.

In Methanoculleus marisnigri (strain ATCC 35101 / DSM 1498 / JR1), this protein is Large ribosomal subunit protein eL21.